A 344-amino-acid chain; its full sequence is Protein pelota homolog (344 aa).

The protein belongs to the eukaryotic release factor 1 family. Pelota subfamily. In terms of assembly, monomer. A divalent metal cation serves as cofactor.

Its subcellular location is the cytoplasm. Functionally, may function in recognizing stalled ribosomes, interact with stem-loop structures in stalled mRNA molecules, and effect endonucleolytic cleavage of the mRNA. May play a role in the release non-functional ribosomes and degradation of damaged mRNAs. Has endoribonuclease activity. The chain is Protein pelota homolog from Saccharolobus islandicus (strain Y.N.15.51 / Yellowstone #2) (Sulfolobus islandicus).